The following is a 95-amino-acid chain: Glutaredoxin 1 (95 aa).

The Glutaredoxin domain maps to 1 to 95; it reads MNKSILHTII…DKLLEHQPKN (95 aa). C17 and C20 form a disulfide bridge.

This sequence belongs to the glutaredoxin family. Monomer.

The protein localises to the cytoplasm. In terms of biological role, has a glutathione-disulfide oxidoreductase activity in the presence of NADPH and glutathione reductase. Reduces low molecular weight disulfides and proteins. In Rickettsia prowazekii (strain Madrid E), this protein is Glutaredoxin 1 (grxC1).